Consider the following 100-residue polypeptide: Urease subunit gamma (100 aa).

This sequence belongs to the urease gamma subunit family. In terms of assembly, heterotrimer of UreA (gamma), UreB (beta) and UreC (alpha) subunits. Three heterotrimers associate to form the active enzyme.

The protein localises to the cytoplasm. It catalyses the reaction urea + 2 H2O + H(+) = hydrogencarbonate + 2 NH4(+). The protein operates within nitrogen metabolism; urea degradation; CO(2) and NH(3) from urea (urease route): step 1/1. The protein is Urease subunit gamma of Synechocystis sp. (strain ATCC 27184 / PCC 6803 / Kazusa).